The chain runs to 224 residues: UPF0758 protein PM1152 (224 aa).

Positions 102 to 224 (AFKNSENVRF…YYSFAENRLL (123 aa)) constitute an MPN domain. Zn(2+) is bound by residues His173, His175, and Asp186. The JAMM motif signature appears at 173 to 186 (HNHPSGNPEPSASD).

This sequence belongs to the UPF0758 family.

The protein is UPF0758 protein PM1152 of Pasteurella multocida (strain Pm70).